A 200-amino-acid polypeptide reads, in one-letter code: Imidazoleglycerol-phosphate dehydratase (200 aa).

This sequence belongs to the imidazoleglycerol-phosphate dehydratase family.

It localises to the cytoplasm. The enzyme catalyses D-erythro-1-(imidazol-4-yl)glycerol 3-phosphate = 3-(imidazol-4-yl)-2-oxopropyl phosphate + H2O. The protein operates within amino-acid biosynthesis; L-histidine biosynthesis; L-histidine from 5-phospho-alpha-D-ribose 1-diphosphate: step 6/9. The polypeptide is Imidazoleglycerol-phosphate dehydratase (Chlorobium phaeobacteroides (strain BS1)).